We begin with the raw amino-acid sequence, 239 residues long: Proteasome subunit beta (239 aa).

Polar residues predominate over residues 1–16 (MRQPDSSLPRTGQDHT). The disordered stretch occupies residues 1–32 (MRQPDSSLPRTGQDHTLSPYEPELGEVPSNDL). The propeptide at 1-44 (MRQPDSSLPRTGQDHTLSPYEPELGEVPSNDLSMADLDNVNKTG) is removed in mature form; by autocatalysis. Residue Thr-45 is the Nucleophile of the active site.

It belongs to the peptidase T1B family. In terms of assembly, the 20S proteasome core is composed of 14 alpha and 14 beta subunits that assemble into four stacked heptameric rings, resulting in a barrel-shaped structure. The two inner rings, each composed of seven catalytic beta subunits, are sandwiched by two outer rings, each composed of seven alpha subunits. The catalytic chamber with the active sites is on the inside of the barrel. Has a gated structure, the ends of the cylinder being occluded by the N-termini of the alpha-subunits. Is capped at one or both ends by the proteasome regulatory ATPase, PAN.

Its subcellular location is the cytoplasm. The catalysed reaction is Cleavage of peptide bonds with very broad specificity.. The formation of the proteasomal ATPase PAN-20S proteasome complex, via the docking of the C-termini of PAN into the intersubunit pockets in the alpha-rings, triggers opening of the gate for substrate entry. Interconversion between the open-gate and close-gate conformations leads to a dynamic regulation of the 20S proteasome proteolysis activity. Its function is as follows. Component of the proteasome core, a large protease complex with broad specificity involved in protein degradation. This is Proteasome subunit beta from Natronomonas pharaonis (strain ATCC 35678 / DSM 2160 / CIP 103997 / JCM 8858 / NBRC 14720 / NCIMB 2260 / Gabara) (Halobacterium pharaonis).